The primary structure comprises 675 residues: Rho GTPase-activating protein 40 (675 aa).

Disordered stretches follow at residues 95–118 and 187–218; these read RDELREEDSGGNEGQLPEEGEAES and KMSSENGDSGMKGAQLSSGASKFPPAAEPGGL. Acidic residues predominate over residues 103 to 116; it reads SGGNEGQLPEEGEA. The 200-residue stretch at 323-522 folds into the Rho-GAP domain; it reads VPLDSLLEAD…IMVHYQDLLW (200 aa).

Functionally, GTPase activator for the Rho-type GTPases by converting them to an inactive GDP-bound state. The protein is Rho GTPase-activating protein 40 of Homo sapiens (Human).